The sequence spans 91 residues: Small ribosomal subunit protein uS19 (91 aa).

This sequence belongs to the universal ribosomal protein uS19 family.

Its function is as follows. Protein S19 forms a complex with S13 that binds strongly to the 16S ribosomal RNA. This Amoebophilus asiaticus (strain 5a2) protein is Small ribosomal subunit protein uS19.